Consider the following 226-residue polypeptide: 7-carboxy-7-deazaguanine synthase (226 aa).

Substrate contacts are provided by residues 10 to 12 and Arg25; that span reads LQG. Positions 16 to 221 constitute a Radical SAM core domain; it reads YTGIPCIFVR…LQTHKFIWTP (206 aa). Positions 29, 33, and 36 each coordinate [4Fe-4S] cluster. Ser38 provides a ligand contact to Mg(2+). Thr69 is a substrate binding site. Gly71 is a binding site for S-adenosyl-L-methionine.

This sequence belongs to the radical SAM superfamily. 7-carboxy-7-deazaguanine synthase family. In terms of assembly, homodimer. [4Fe-4S] cluster is required as a cofactor. Requires S-adenosyl-L-methionine as cofactor. The cofactor is Mg(2+).

It carries out the reaction 6-carboxy-5,6,7,8-tetrahydropterin + H(+) = 7-carboxy-7-deazaguanine + NH4(+). It participates in purine metabolism; 7-cyano-7-deazaguanine biosynthesis. Its function is as follows. Catalyzes the complex heterocyclic radical-mediated conversion of 6-carboxy-5,6,7,8-tetrahydropterin (CPH4) to 7-carboxy-7-deazaguanine (CDG), a step common to the biosynthetic pathways of all 7-deazapurine-containing compounds. The chain is 7-carboxy-7-deazaguanine synthase from Koribacter versatilis (strain Ellin345).